The primary structure comprises 504 residues: Sperm motility kinase 3A (504 aa).

Positions 28 to 276 constitute a Protein kinase domain; sequence YVMLETIGHG…VAEVMVHPWV (249 aa). ATP contacts are provided by residues 34 to 42 and Lys57; that span reads IGHGGCATV. Asp147 serves as the catalytic Proton acceptor. A UBA domain is found at 294–334; it reads KPDPAIVKAMGHIGFQAQDIEDSLRQRKFNQTMASYCLLKK. Disordered stretches follow at residues 389–421 and 441–468; these read VCGK…MDHT and NSSE…WPRG. Over residues 441 to 451 the composition is skewed to polar residues; the sequence is NSSEESTQGHT.

Belongs to the protein kinase superfamily. CAMK Ser/Thr protein kinase family. Smok subfamily. As to expression, testis-specific. Expressed in the testis from 22 days postpartum (22 dpp).

It carries out the reaction L-seryl-[protein] + ATP = O-phospho-L-seryl-[protein] + ADP + H(+). It catalyses the reaction L-threonyl-[protein] + ATP = O-phospho-L-threonyl-[protein] + ADP + H(+). Its function is as follows. May play a role in sperm motility, especially in the regulation of flagellar function. This chain is Sperm motility kinase 3A, found in Mus musculus (Mouse).